Consider the following 268-residue polypeptide: Esterase GME11355 (268 aa).

Residues S122, D212, and H240 each act as charge relay system in the active site.

This sequence belongs to the LovG family.

The protein operates within secondary metabolite biosynthesis. Functionally, esterase; part of the gene cluster that mediates the biosynthesis of dibenzodioxocinones such as pestalotiollide B, a novel class of inhibitors against cholesterol ester transfer protein (CEPT). The biosynthesis initiates from condensation of acetate and malonate units catalyzed by the non-reducing PKS pks8/GME11356. Pks8/GME11356 lacks a thioesterase (TE) domain, which is important to the cyclizing of the third ring of atrochrysone carboxylic acid, and the esterase GME11355 might play the role of TE and catalyzes the cyclization reaction of the C ring. The lactamase-like protein GME11357 (or other beta-lactamases in Pestalotiopsis microspora) probably hydrolyzes the thioester bond between the ACP of pks8/GME11356 and the intermediate to release atrochrysone carboxylic acid, which is spontaneously dehydrates to form endocrocin anthrone. Endocrocin anthrone is further converted to emodin via the endocrocin intermediate. Emodin is then oxidized by several enzymes such as the Baeyer-Villiger oxidase GME11358, the oxidoreductase GME11367, the short chain dehydrogenase/reductase GME11373, as well as by other oxidoreductases from the cluster, to modify the A and C rings and open the B ring, and finally yield monodictyphenone. The prenyltransferase GME11375 may catalyze the addition reaction between the C5 side chains and the carbon bone of dibenzodioxocinones. The remaining biochemical reactions to the final product dibenzodioxocinones should be methylation catalyzed by methyltransferase GME11366 and reduction and lactonization reaction catalyzed by a series of oxidordeuctases. The sequence is that of Esterase GME11355 from Pestalotiopsis microspora.